Consider the following 98-residue polypeptide: Large ribosomal subunit protein bL27 (98 aa).

Over residues 1–11 (MASKASGGSTR) the composition is skewed to polar residues. Residues 1-20 (MASKASGGSTRNGRDSISKR) form a disordered region.

Belongs to the bacterial ribosomal protein bL27 family.

This chain is Large ribosomal subunit protein bL27, found in Aquifex aeolicus (strain VF5).